Reading from the N-terminus, the 262-residue chain is Acyl-[acyl-carrier-protein]--UDP-N-acetylglucosamine O-acyltransferase (262 aa).

It belongs to the transferase hexapeptide repeat family. LpxA subfamily. In terms of assembly, homotrimer.

The protein resides in the cytoplasm. The catalysed reaction is a (3R)-hydroxyacyl-[ACP] + UDP-N-acetyl-alpha-D-glucosamine = a UDP-3-O-[(3R)-3-hydroxyacyl]-N-acetyl-alpha-D-glucosamine + holo-[ACP]. It participates in glycolipid biosynthesis; lipid IV(A) biosynthesis; lipid IV(A) from (3R)-3-hydroxytetradecanoyl-[acyl-carrier-protein] and UDP-N-acetyl-alpha-D-glucosamine: step 1/6. Its function is as follows. Involved in the biosynthesis of lipid A, a phosphorylated glycolipid that anchors the lipopolysaccharide to the outer membrane of the cell. The polypeptide is Acyl-[acyl-carrier-protein]--UDP-N-acetylglucosamine O-acyltransferase (Burkholderia lata (strain ATCC 17760 / DSM 23089 / LMG 22485 / NCIMB 9086 / R18194 / 383)).